The following is a 469-amino-acid chain: Glutamate--tRNA ligase (469 aa).

The short motif at 9 to 19 (PSPTGYLHVGG) is the 'HIGH' region element. Zn(2+) contacts are provided by Cys-98, Cys-100, Cys-125, and Asp-127. Positions 237 to 241 (KLSKR) match the 'KMSKS' region motif. Position 240 (Lys-240) interacts with ATP.

This sequence belongs to the class-I aminoacyl-tRNA synthetase family. Glutamate--tRNA ligase type 1 subfamily. Monomer. Zn(2+) serves as cofactor.

The protein localises to the cytoplasm. It carries out the reaction tRNA(Glu) + L-glutamate + ATP = L-glutamyl-tRNA(Glu) + AMP + diphosphate. Catalyzes the attachment of glutamate to tRNA(Glu) in a two-step reaction: glutamate is first activated by ATP to form Glu-AMP and then transferred to the acceptor end of tRNA(Glu). This is Glutamate--tRNA ligase from Serratia proteamaculans (strain 568).